The chain runs to 44 residues: Thrombin-like enzyme F202 (44 aa).

Positions 1 to 44 (VVGGDECNINEHRFLVALYANSSLLCGGTLINQEWVLIAAHCDR) constitute a Peptidase S1 domain. C26 and C42 are oxidised to a cystine. H41 (charge relay system) is an active-site residue.

Belongs to the peptidase S1 family. Snake venom subfamily. Monomer. In terms of processing, contains 6 disulfide bonds. In terms of tissue distribution, expressed by the venom gland.

The protein localises to the secreted. Its activity is regulated as follows. Enzyme activity is markedly inhibited by TLCK and PMSF, and moderately by SBTi. Platelet aggregating activity is strongly inhibited by TLCK. In terms of biological role, thrombin-like snake venom serine protease that coagulates fibrinogen by inducing a fast degradation of the alpha chain (FGA) from human citrated plasma, and a slow degradation of beta chain (FGB). Potently induces platelet aggregation in both platelet rich plasma and washed platelet preparations in a concentration-dependent fashion. Shows amidolytic activities. In Crotalus durissus cascavella (Northeastern Brazilian rattlesnake), this protein is Thrombin-like enzyme F202.